Reading from the N-terminus, the 609-residue chain is UvrABC system protein C (609 aa).

The GIY-YIG domain maps to 16–94 (HLPGVYRHLD…IKSLRPRYNI (79 aa)). In terms of domain architecture, UVR spans 203 to 238 (REVMDEIEARMLQASTELRFEEAAVLRDQMGSLSKV).

It belongs to the UvrC family. As to quaternary structure, interacts with UvrB in an incision complex.

Its subcellular location is the cytoplasm. In terms of biological role, the UvrABC repair system catalyzes the recognition and processing of DNA lesions. UvrC both incises the 5' and 3' sides of the lesion. The N-terminal half is responsible for the 3' incision and the C-terminal half is responsible for the 5' incision. The protein is UvrABC system protein C of Bordetella pertussis (strain Tohama I / ATCC BAA-589 / NCTC 13251).